An 882-amino-acid polypeptide reads, in one-letter code: Valine--tRNA ligase (882 aa).

The short motif at 50–60 (PNVTGKLHLGH) is the 'HIGH' region element. Residues 526 to 530 (KMSKS) carry the 'KMSKS' region motif. Lys-529 serves as a coordination point for ATP. Residues 810–881 (LEALIDLDLE…VLERIETLKE (72 aa)) are a coiled coil.

It belongs to the class-I aminoacyl-tRNA synthetase family. ValS type 1 subfamily. In terms of assembly, monomer.

It is found in the cytoplasm. The enzyme catalyses tRNA(Val) + L-valine + ATP = L-valyl-tRNA(Val) + AMP + diphosphate. Its function is as follows. Catalyzes the attachment of valine to tRNA(Val). As ValRS can inadvertently accommodate and process structurally similar amino acids such as threonine, to avoid such errors, it has a 'posttransfer' editing activity that hydrolyzes mischarged Thr-tRNA(Val) in a tRNA-dependent manner. This is Valine--tRNA ligase from Listeria innocua serovar 6a (strain ATCC BAA-680 / CLIP 11262).